Consider the following 579-residue polypeptide: 2-isopropylmalate synthase (579 aa).

The 275-residue stretch at 40–314 (PRWCAVDLRD…DPMIDFSDID (275 aa)) folds into the Pyruvate carboxyltransferase domain. Mg(2+) contacts are provided by Asp-49, His-253, His-255, and Asn-289. A regulatory domain region spans residues 456 to 579 (SDEEQAQWGR…VNRAVRDAQA (124 aa)).

This sequence belongs to the alpha-IPM synthase/homocitrate synthase family. LeuA type 2 subfamily. As to quaternary structure, homodimer. Mg(2+) is required as a cofactor.

It is found in the cytoplasm. It catalyses the reaction 3-methyl-2-oxobutanoate + acetyl-CoA + H2O = (2S)-2-isopropylmalate + CoA + H(+). It functions in the pathway amino-acid biosynthesis; L-leucine biosynthesis; L-leucine from 3-methyl-2-oxobutanoate: step 1/4. Functionally, catalyzes the condensation of the acetyl group of acetyl-CoA with 3-methyl-2-oxobutanoate (2-ketoisovalerate) to form 3-carboxy-3-hydroxy-4-methylpentanoate (2-isopropylmalate). The protein is 2-isopropylmalate synthase of Paenarthrobacter aurescens (strain TC1).